The sequence spans 274 residues: Pyrroline-5-carboxylate reductase 3 (274 aa).

Residue A2 is modified to N-acetylalanine.

The protein belongs to the pyrroline-5-carboxylate reductase family. Homodecamer; composed of 5 homodimers.

The protein resides in the cytoplasm. The catalysed reaction is L-proline + NADP(+) = (S)-1-pyrroline-5-carboxylate + NADPH + 2 H(+). The enzyme catalyses L-proline + NAD(+) = (S)-1-pyrroline-5-carboxylate + NADH + 2 H(+). It participates in amino-acid biosynthesis; L-proline biosynthesis; L-proline from L-glutamate 5-semialdehyde: step 1/1. Functionally, oxidoreductase that catalyzes the last step in proline biosynthesis, which corresponds to the reduction of pyrroline-5-carboxylate (P5C) to L-proline using NAD(P)H. Proline is synthesized from either glutamate or ornithine; both are converted to P5C, and then to proline via pyrroline-5-carboxylate reductases (PYCRs). PYCR3 is exclusively linked to the biosynthesis of proline from ornithine. This is Pyrroline-5-carboxylate reductase 3 from Mus musculus (Mouse).